Consider the following 251-residue polypeptide: tRNA pseudouridine synthase A (251 aa).

The active-site Nucleophile is the D56. Residue Y110 participates in substrate binding.

Belongs to the tRNA pseudouridine synthase TruA family.

The catalysed reaction is uridine(38/39/40) in tRNA = pseudouridine(38/39/40) in tRNA. Functionally, formation of pseudouridine at positions 38, 39 and 40 in the anticodon stem and loop of transfer RNAs. The polypeptide is tRNA pseudouridine synthase A (Picrophilus torridus (strain ATCC 700027 / DSM 9790 / JCM 10055 / NBRC 100828 / KAW 2/3)).